The chain runs to 182 residues: Thymidine kinase (182 aa).

Residue 8–15 (GPMFSGKT) participates in ATP binding. Glu85 functions as the Proton acceptor in the catalytic mechanism. Residue Phe117 coordinates substrate. Zn(2+) is bound by residues Cys142 and Cys145. A substrate-binding site is contributed by 161 to 165 (IIEIG). 2 residues coordinate Zn(2+): Cys174 and Cys177.

The protein belongs to the thymidine kinase family.

The catalysed reaction is thymidine + ATP = dTMP + ADP + H(+). This is Thymidine kinase (TK) from Amsacta moorei entomopoxvirus (AmEPV).